A 234-amino-acid chain; its full sequence is MTKIAMANFKSAMPVFKSHAYLKELEKTLKPQHFDRVFVFPDFLGLLPNAFLHFTLGAQNAYPRDCGAFTGEITSKHLEELKIHTLLIGHSERRVLLKESPSFLKEKFDFFKGKNFKIVYCIGEDLTTREKGFRAVKEFLSEQLENIDLNYSNLIVAYEPIWAIGTKKSASLEDIYLTHGFLKQILNQKTPLLYGGSVNAQNAKEILGIDSVDGLLIGSASLELENFKTIISFL.

A substrate-binding site is contributed by 8-10 (NFK). The active-site Electrophile is the H90. The Proton acceptor role is filled by E159. G165 and S197 together coordinate substrate.

Belongs to the triosephosphate isomerase family. Homodimer.

The protein resides in the cytoplasm. The enzyme catalyses D-glyceraldehyde 3-phosphate = dihydroxyacetone phosphate. Its pathway is carbohydrate biosynthesis; gluconeogenesis. It participates in carbohydrate degradation; glycolysis; D-glyceraldehyde 3-phosphate from glycerone phosphate: step 1/1. Its function is as follows. Involved in the gluconeogenesis. Catalyzes stereospecifically the conversion of dihydroxyacetone phosphate (DHAP) to D-glyceraldehyde-3-phosphate (G3P). The polypeptide is Triosephosphate isomerase (Helicobacter pylori (strain J99 / ATCC 700824) (Campylobacter pylori J99)).